Reading from the N-terminus, the 448-residue chain is Exodeoxyribonuclease 7 large subunit (448 aa).

The protein belongs to the XseA family. In terms of assembly, heterooligomer composed of large and small subunits.

It is found in the cytoplasm. It catalyses the reaction Exonucleolytic cleavage in either 5'- to 3'- or 3'- to 5'-direction to yield nucleoside 5'-phosphates.. Bidirectionally degrades single-stranded DNA into large acid-insoluble oligonucleotides, which are then degraded further into small acid-soluble oligonucleotides. In Shewanella sp. (strain MR-4), this protein is Exodeoxyribonuclease 7 large subunit.